The chain runs to 441 residues: Protein eva-1 homolog C (441 aa).

A disordered region spans residues 1–23; that stretch reads MLLPGPARQPPTPQPVQHPGLRR. An N-terminal signal peptide occupies residues 1–48; sequence MLLPGPARQPPTPQPVQHPGLRRQVEPPGQLLRLFYCTVLVCSKEISA. Residues 7–16 show a composition bias toward pro residues; that stretch reads ARQPPTPQPV. Residues 49–322 lie on the Extracellular side of the membrane; sequence LTDFSGYLTK…AYIRAHPERA (274 aa). N-linked (GlcNAc...) asparagine glycosylation is present at N62. The region spanning 67–159 is the SUEL-type lectin 1 domain; it reads ACDGDYLNLQ…KYLLVSFKCQ (93 aa). A glycan (N-linked (GlcNAc...) asparagine) is linked at N165. The region spanning 168–260 is the SUEL-type lectin 2 domain; sequence VCEDQELKLH…KYLTVTYACV (93 aa). Residues 323 to 343 traverse the membrane as a helical segment; the sequence is ALLFVSSVCIGLALTLCALVI. Over 344–441 the chain is Cytoplasmic; it reads RESCAKDFRD…SLPRNMGQFY (98 aa). The tract at residues 362-391 is disordered; sequence VPGSDKVEEDSEDEEEEEDSSESDFPGELS. The span at 368 to 383 shows a compositional bias: acidic residues; sequence VEEDSEDEEEEEDSSE.

Belongs to the EVA1 family.

It localises to the cell membrane. Its function is as follows. Binds heparin. This chain is Protein eva-1 homolog C (EVA1C), found in Pan troglodytes (Chimpanzee).